Reading from the N-terminus, the 2138-residue chain is DNA polymerase epsilon catalytic subunit B (2138 aa).

The Nuclear localization signal 1 motif lies at Glu1224–Thr1231. Zn(2+)-binding residues include Cys2015, Cys2018, Cys2040, and Cys2045. The segment at Cys2015–Cys2045 adopts a CysA-type zinc-finger fold. 4 residues coordinate [4Fe-4S] cluster: Cys2076, Cys2079, Cys2091, and Cys2093. Residues Cys2076–Cys2093 carry the CysB motif motif. A Nuclear localization signal 2 motif is present at residues His2107–Leu2114.

This sequence belongs to the DNA polymerase type-B family. As to quaternary structure, heterotetramer. The cofactor is [4Fe-4S] cluster. As to expression, mostly expressed at low levels in inflorescence (floral meristem and flowers until anthesis), and, to a lower extent, in seeds.

The protein resides in the nucleus. The catalysed reaction is DNA(n) + a 2'-deoxyribonucleoside 5'-triphosphate = DNA(n+1) + diphosphate. Its function is as follows. DNA polymerase II, which participates in chromosomal DNA replication. Involved in the determination of cell fate during plant embryogenesis. Contributes to the flowering time repression. The sequence is that of DNA polymerase epsilon catalytic subunit B (POL2B) from Arabidopsis thaliana (Mouse-ear cress).